Consider the following 463-residue polypeptide: Fumarate hydratase class II (463 aa).

Substrate-binding positions include 97–99 (SGT), 128–131 (HPND), 138–140 (SSN), and Thr-186. His-187 functions as the Proton donor/acceptor in the catalytic mechanism. Ser-317 is a catalytic residue. Substrate contacts are provided by residues Ser-318 and 323-325 (KVN).

The protein belongs to the class-II fumarase/aspartase family. Fumarase subfamily. As to quaternary structure, homotetramer.

The protein localises to the cytoplasm. It catalyses the reaction (S)-malate = fumarate + H2O. It functions in the pathway carbohydrate metabolism; tricarboxylic acid cycle; (S)-malate from fumarate: step 1/1. Involved in the TCA cycle. Catalyzes the stereospecific interconversion of fumarate to L-malate. This chain is Fumarate hydratase class II, found in Helicobacter pylori (strain ATCC 700392 / 26695) (Campylobacter pylori).